We begin with the raw amino-acid sequence, 220 residues long: U1 small nuclear ribonucleoprotein C (220 aa).

The Matrin-type zinc-finger motif lies at 4–36 (YYCDYCDIYLTHDSMNARKAHNSGRNHVANVRD). Pro residues-rich tracts occupy residues 88-130 (PGPP…PFLP) and 147-165 (PPFPPNTASPNPGMPPFRP). The segment at 88-220 (PGPPPPGAFP…HPDRLRMLGQ (133 aa)) is disordered. A compositionally biased stretch (low complexity) spans 166–200 (PMGMGMPPAPAQAQAQGSPMGMPQQGQQGTFTPTQ). Basic and acidic residues predominate over residues 211-220 (HPDRLRMLGQ).

It belongs to the U1 small nuclear ribonucleoprotein C family. In terms of assembly, U1 snRNP is composed of the 7 core Sm proteins B/B', D1, D2, D3, E, F and G that assemble in a heptameric protein ring on the Sm site of the small nuclear RNA to form the core snRNP, and at least 3 U1 snRNP-specific proteins U1-70K, U1-A and U1-C. U1-C interacts with U1 snRNA and the 5' splice-site region of the pre-mRNA.

The protein resides in the nucleus. Component of the spliceosomal U1 snRNP, which is essential for recognition of the pre-mRNA 5' splice-site and the subsequent assembly of the spliceosome. U1-C is directly involved in initial 5' splice-site recognition for both constitutive and regulated alternative splicing. The interaction with the 5' splice-site seems to precede base-pairing between the pre-mRNA and the U1 snRNA. Stimulates commitment or early (E) complex formation by stabilizing the base pairing of the 5' end of the U1 snRNA and the 5' splice-site region. The chain is U1 small nuclear ribonucleoprotein C from Cryptococcus neoformans var. neoformans serotype D (strain JEC21 / ATCC MYA-565) (Filobasidiella neoformans).